A 706-amino-acid polypeptide reads, in one-letter code: MKIILTLLIILFSLNKNLNFVSSEVTKSRICSIFDQLPKLNSDFEPDYGDISVGMIKNVLEGDSPTLASNDPNFKPFVNGKLKNLNLFPTWFNKNHTQNVMLLKKLNLTLDKSSNIYSFVKDDFFPIDYQGWDVDESNRIYYGGRIFTAYHNFHYCLKINSVFFYQGTETFKFEGDDDVWVFIDKKLVLDLGGLHPARRGTVDLTKLGLQVNKTYSFDFFYCERHTPYSKMKIQTDIQAFCAWSDYCGVCQGDGSTCCNKDLDCDDDDPCTIDSCPLPNLPIPGGDKISKYCRHTNITCTQPSNNKCVITGCSKDTNGKCEVIGNLECADKSKYCMTLTGCDPKLGCQYKSNCIGPCLTGECNNGKCTSMDADYCSNELGEDPCKIYSCNAKNGGCMATPKCTSPSSSNPCVIPTCSADKGVCGTYTQNSTECNCNCKLNPCQKNNCDQSVNPPVCSPLPIDTIDDGNPCTIDICDKITGSVKHTPMECSGCTKCNNGKCIPIESNCDDGNLCTIDQCMNNGSCIHTPLSCNITNPCMDYTCNADIGCVGVPKICPNKGNCLIGYCDAGECKLKDRICDSPSFCQISQCSDVTGCIVFDKVCIPSNPKCETGVCINATSTEPGRCESVDFDPKPFVCKPAAIISTSVIVGVSVAAAVVAIAIVVASKKGYDAWAASNNNSLASLTSNPLYENPTGNGDNPMYQPNS.

A signal peptide spans 1–23 (MKIILTLLIILFSLNKNLNFVSS). The Extracellular portion of the chain corresponds to 24–644 (EVTKSRICSI…FVCKPAAIIS (621 aa)). Asparagine 95, asparagine 107, asparagine 212, asparagine 296, asparagine 429, asparagine 521, asparagine 532, and asparagine 616 each carry an N-linked (GlcNAc...) asparagine glycan. The PA14 domain maps to 109-253 (TLDKSSNIYS…SDYCGVCQGD (145 aa)). The helical transmembrane segment at 645-665 (TSVIVGVSVAAAVVAIAIVVA) threads the bilayer. At 666–706 (SKKGYDAWAASNNNSLASLTSNPLYENPTGNGDNPMYQPNS) the chain is on the cytoplasmic side. Residues 687–706 (NPLYENPTGNGDNPMYQPNS) form a disordered region. A compositionally biased stretch (polar residues) spans 693-706 (PTGNGDNPMYQPNS).

The protein belongs to the prespore-cell-inducing factor family.

It is found in the membrane. The protein is Protein psiG (psiG-1) of Dictyostelium discoideum (Social amoeba).